The following is a 451-amino-acid chain: MDLKGKKVLLVGLAKTGISTIKHLDKLGASIIVNDIKDENKLRNILDELKSINDIKYILGHHPEDVDDIDMVVVSPGVPLDLPFILKLKNSGKYIIGEVELAFKLSNNPIFIGITGTNGKTTTTSLVGEIFSRAKRDTYVVGNIGNPVIDTIETSSEESVLVTELSSFQLESIDEFRPKVSAILNITEDHLNRHHTMEKYIEAKANIFMNQTVEDFCVLNYDDEIVKSLADKCNAKVIYFSRTKKVNGGVYLENNDIIIDIDDKIKFLNKDDVSLPGGHNLENCMAAIAIAYVCKIDLEVIKDVLMTFKGVEHRQEFVRNLDNVIYVNDSKGTNPDSTIKAIQSYDRPIILIAGGMDKGSNFDELLETAKSYVKSLVLLGETASNIENCAKNKGFNDIHIVKDMEEAVKTSYEISKSGDIVLLSPACASWDMYESFEVRGKDFKDNVNNLK.

Residue 116-122 (GTNGKTT) coordinates ATP.

This sequence belongs to the MurCDEF family.

Its subcellular location is the cytoplasm. The catalysed reaction is UDP-N-acetyl-alpha-D-muramoyl-L-alanine + D-glutamate + ATP = UDP-N-acetyl-alpha-D-muramoyl-L-alanyl-D-glutamate + ADP + phosphate + H(+). Its pathway is cell wall biogenesis; peptidoglycan biosynthesis. Its function is as follows. Cell wall formation. Catalyzes the addition of glutamate to the nucleotide precursor UDP-N-acetylmuramoyl-L-alanine (UMA). The sequence is that of UDP-N-acetylmuramoylalanine--D-glutamate ligase from Clostridioides difficile (strain 630) (Peptoclostridium difficile).